Here is a 143-residue protein sequence, read N- to C-terminus: Large-conductance mechanosensitive channel (143 aa).

A run of 3 helical transmembrane segments spans residues 21-41, 44-64, and 86-106; these read VGVI…ADII, VVGL…LGTV, and GNFI…FMMV.

It belongs to the MscL family. In terms of assembly, homopentamer.

It localises to the cell inner membrane. Its function is as follows. Channel that opens in response to stretch forces in the membrane lipid bilayer. May participate in the regulation of osmotic pressure changes within the cell. This chain is Large-conductance mechanosensitive channel, found in Variovorax paradoxus (strain S110).